The sequence spans 450 residues: MQHHDIPGAAPQPIDKLLAPFRRFFAIEASSGILLMAATVLALVWANSGFSASYHALWSNKVTVGFGDYALSKALILWINDGLMAIFFFVVGLEIKREILAGELASPRQAALPIAAAIGGMLVPAGIYLALNGGTAAASGWGVPMATDIAFALGILSLLGDRVPLSLKVFLTAVAIVDDLGAILVIAFFYTANLSFSFLMLGFAAFAVMLLLNWLGVRRVTPYLLVGLVLWFALLKSGVHATIAGVLGAMAIPARSALAPAVLRGTARQALSVFENALQGDTPVLASQDKSHAIHHVEMLTEKAGTPLQRLEHALHPWVAWFIMPVFALANAGVTVSAEMVSMLFEPLSLGIFFGLLLGKQGGVTLAVWLLVKTGIAKLPKGVGLGMYYGIGWLAGIGFTMAIFIATLAFEDPAHIEAAKMSILCASFVAGFGGYMLMRVLLRGREPEKA.

The next 11 membrane-spanning stretches (helical) occupy residues Phe-24–Val-44, Leu-75–Ile-95, Ala-111–Leu-131, Gly-140–Gly-160, Val-169–Phe-189, Phe-196–Gly-216, Leu-224–Ala-244, Trp-318–Ala-338, Ile-352–Val-372, Gly-390–Phe-410, and Ser-422–Leu-442.

The protein belongs to the NhaA Na(+)/H(+) (TC 2.A.33) antiporter family.

The protein localises to the cell inner membrane. The enzyme catalyses Na(+)(in) + 2 H(+)(out) = Na(+)(out) + 2 H(+)(in). Functionally, na(+)/H(+) antiporter that extrudes sodium in exchange for external protons. This chain is Na(+)/H(+) antiporter NhaA, found in Oleidesulfovibrio alaskensis (strain ATCC BAA-1058 / DSM 17464 / G20) (Desulfovibrio alaskensis).